A 276-amino-acid chain; its full sequence is Dermonecrotic toxin LlSicTox-alphaIV2iv (276 aa).

Histidine 5 is a catalytic residue. Residues glutamate 25 and aspartate 27 each contribute to the Mg(2+) site. Residue histidine 41 is the Nucleophile of the active site. 2 disulfides stabilise this stretch: cysteine 45–cysteine 51 and cysteine 47–cysteine 193. Aspartate 85 lines the Mg(2+) pocket.

It belongs to the arthropod phospholipase D family. Class II subfamily. It depends on Mg(2+) as a cofactor. Expressed by the venom gland.

The protein resides in the secreted. It catalyses the reaction an N-(acyl)-sphingosylphosphocholine = an N-(acyl)-sphingosyl-1,3-cyclic phosphate + choline. The enzyme catalyses an N-(acyl)-sphingosylphosphoethanolamine = an N-(acyl)-sphingosyl-1,3-cyclic phosphate + ethanolamine. The catalysed reaction is a 1-acyl-sn-glycero-3-phosphocholine = a 1-acyl-sn-glycero-2,3-cyclic phosphate + choline. It carries out the reaction a 1-acyl-sn-glycero-3-phosphoethanolamine = a 1-acyl-sn-glycero-2,3-cyclic phosphate + ethanolamine. Dermonecrotic toxins cleave the phosphodiester linkage between the phosphate and headgroup of certain phospholipids (sphingolipid and lysolipid substrates), forming an alcohol (often choline) and a cyclic phosphate. This toxin acts on sphingomyelin (SM). It may also act on ceramide phosphoethanolamine (CPE), lysophosphatidylcholine (LPC) and lysophosphatidylethanolamine (LPE), but not on lysophosphatidylserine (LPS), and lysophosphatidylglycerol (LPG). It acts by transphosphatidylation, releasing exclusively cyclic phosphate products as second products. Induces dermonecrosis, hemolysis, increased vascular permeability, edema, inflammatory response, and platelet aggregation. The chain is Dermonecrotic toxin LlSicTox-alphaIV2iv from Loxosceles laeta (South American recluse spider).